Here is a 785-residue protein sequence, read N- to C-terminus: MATTHAPAEPPKRRRIGVLTSGGDAPGMNGAVRAVVRMAIYSGCEAYAVYEGYEGLVHGGDMIRQVHWEDVRGWLSRGGTLIGSARSMAFRERAGRLKAAKNMIVRGIDALVVCGGDGSLTGADLFRSEWPGLLEELVKTGELTEEQIVPYKVLNIVGLVGSIDNDMSGTDATIGCYSSLTRICDAVDDVFDTAYSHQRGFVIEVMGRHCGWLALMSAISTGADWLFIPEMPPREGWEDDMCDIITKNRQERGKRRTIVIVAEGAHDRQLNKITSSKIKDILTNRLDLDTRVTVLGHTQRGGAACAYDRTLSTLQGVEAVRAVLDMTPESPSPVITVRENKLLRTPLMDAVKATKEVADLIHERKFDEAMHLRDSEFKEYHFAYKNTATPDHPKLILPENKRMRIAIIHVGAPAGGMNQATRAAVAYCQTRGHTALAVHNGFPGLCRHHADTPVSSVREVSWEEQDTWVNEGGSDIGTNRSLPSEDFETTAKCFEKFKFDGLFVVGGFEAFTAVSQLRQAREKYPAFKIPMVVLPATISNNVPGTEYSLGSDTCLNTLIDFCDAIRQSASSSRRRVFVVETQGGKSGYVATTAGLAVGASAVYIPEEGIDIKMLARDIDFLRNNFAHDKGANRAGKIILRNETASSTYTTQVIADMIKEEAKGRFESRAAVPGHFQQGGKPSPMDRIRALRMAIRCMQHIETFSGKSADEIAADELSATVIGVKGSQVLFSQMGGPNGLEATETDWARRRPKDEFWLDLQSTVNILSGRASFGEGKTGWSCYENC.

The segment at 1–389 is N-terminal catalytic PFK domain 1; sequence MATTHAPAEP…YHFAYKNTAT (389 aa). ATP-binding positions include Gly23, 86-87, and 116-119; these read RS and GDGS. Residue Asp117 coordinates Mg(2+). Substrate contacts are provided by residues 162 to 164, Arg199, 206 to 208, Glu263, Arg291, and 297 to 300; these read SID, MGR, and HTQR. The active-site Proton acceptor is Asp164. The interval 390–403 is interdomain linker; that stretch reads PDHPKLILPENKRM. The interval 404–785 is C-terminal regulatory PFK domain 2; sequence RIAIIHVGAP…KTGWSCYENC (382 aa). Beta-D-fructose 2,6-bisphosphate is bound by residues Arg480, 537–541, Arg575, 582–584, Glu642, Arg668, 674–677, and Arg749; these read TISNN, QGG, and HFQQ.

It belongs to the phosphofructokinase type A (PFKA) family. ATP-dependent PFK group I subfamily. Eukaryotic two domain clade 'E' sub-subfamily. In terms of assembly, homotetramer. Mg(2+) serves as cofactor.

It is found in the cytoplasm. The catalysed reaction is beta-D-fructose 6-phosphate + ATP = beta-D-fructose 1,6-bisphosphate + ADP + H(+). The protein operates within carbohydrate degradation; glycolysis; D-glyceraldehyde 3-phosphate and glycerone phosphate from D-glucose: step 3/4. Allosterically activated by ADP, AMP, or fructose 2,6-bisphosphate, and allosterically inhibited by ATP or citrate. Functionally, catalyzes the phosphorylation of D-fructose 6-phosphate to fructose 1,6-bisphosphate by ATP, the first committing step of glycolysis. This Aspergillus oryzae (strain ATCC 42149 / RIB 40) (Yellow koji mold) protein is ATP-dependent 6-phosphofructokinase 1 (pfkA).